A 337-amino-acid polypeptide reads, in one-letter code: Anthranilate phosphoribosyltransferase (337 aa).

Residues glycine 80, 83–84 (GD), threonine 88, 90–93 (NIST), 108–116 (KHGNRAVSS), and serine 120 each bind 5-phospho-alpha-D-ribose 1-diphosphate. Residue glycine 80 coordinates anthranilate. Serine 92 is a binding site for Mg(2+). Residue asparagine 111 participates in anthranilate binding. Arginine 166 serves as a coordination point for anthranilate. Mg(2+) contacts are provided by aspartate 224 and glutamate 225.

It belongs to the anthranilate phosphoribosyltransferase family. Homodimer. It depends on Mg(2+) as a cofactor.

The enzyme catalyses N-(5-phospho-beta-D-ribosyl)anthranilate + diphosphate = 5-phospho-alpha-D-ribose 1-diphosphate + anthranilate. Its pathway is amino-acid biosynthesis; L-tryptophan biosynthesis; L-tryptophan from chorismate: step 2/5. In terms of biological role, catalyzes the transfer of the phosphoribosyl group of 5-phosphorylribose-1-pyrophosphate (PRPP) to anthranilate to yield N-(5'-phosphoribosyl)-anthranilate (PRA). The polypeptide is Anthranilate phosphoribosyltransferase (Anaeromyxobacter dehalogenans (strain 2CP-1 / ATCC BAA-258)).